The sequence spans 500 residues: Citrate lyase alpha chain (500 aa).

As to quaternary structure, oligomer with a subunit composition of (alpha,beta,gamma)6.

Its subcellular location is the cytoplasm. The enzyme catalyses citrate = oxaloacetate + acetate. It catalyses the reaction citrate + acetyl-CoA = (3S)-citryl-CoA + acetate. In terms of biological role, represents a citrate:acetyl-ACP transferase. In Haemophilus influenzae (strain ATCC 51907 / DSM 11121 / KW20 / Rd), this protein is Citrate lyase alpha chain (citF).